The following is a 149-amino-acid chain: Large ribosomal subunit protein uL13 (149 aa).

Belongs to the universal ribosomal protein uL13 family. As to quaternary structure, part of the 50S ribosomal subunit.

Functionally, this protein is one of the early assembly proteins of the 50S ribosomal subunit, although it is not seen to bind rRNA by itself. It is important during the early stages of 50S assembly. This chain is Large ribosomal subunit protein uL13, found in Thermobifida fusca (strain YX).